Reading from the N-terminus, the 316-residue chain is 4-hydroxy-3-methylbut-2-enyl diphosphate reductase (316 aa).

C12 serves as a coordination point for [4Fe-4S] cluster. (2E)-4-hydroxy-3-methylbut-2-enyl diphosphate contacts are provided by H43 and H81. Dimethylallyl diphosphate-binding residues include H43 and H81. Isopentenyl diphosphate is bound by residues H43 and H81. A [4Fe-4S] cluster-binding site is contributed by C103. H131 lines the (2E)-4-hydroxy-3-methylbut-2-enyl diphosphate pocket. H131 serves as a coordination point for dimethylallyl diphosphate. H131 is an isopentenyl diphosphate binding site. The Proton donor role is filled by E133. Residue T170 coordinates (2E)-4-hydroxy-3-methylbut-2-enyl diphosphate. A [4Fe-4S] cluster-binding site is contributed by C198. Residues S226, N228, and S271 each contribute to the (2E)-4-hydroxy-3-methylbut-2-enyl diphosphate site. Dimethylallyl diphosphate is bound by residues S226, N228, and S271. Residues S226, N228, and S271 each contribute to the isopentenyl diphosphate site.

Belongs to the IspH family. It depends on [4Fe-4S] cluster as a cofactor.

It catalyses the reaction isopentenyl diphosphate + 2 oxidized [2Fe-2S]-[ferredoxin] + H2O = (2E)-4-hydroxy-3-methylbut-2-enyl diphosphate + 2 reduced [2Fe-2S]-[ferredoxin] + 2 H(+). The catalysed reaction is dimethylallyl diphosphate + 2 oxidized [2Fe-2S]-[ferredoxin] + H2O = (2E)-4-hydroxy-3-methylbut-2-enyl diphosphate + 2 reduced [2Fe-2S]-[ferredoxin] + 2 H(+). Its pathway is isoprenoid biosynthesis; dimethylallyl diphosphate biosynthesis; dimethylallyl diphosphate from (2E)-4-hydroxy-3-methylbutenyl diphosphate: step 1/1. It participates in isoprenoid biosynthesis; isopentenyl diphosphate biosynthesis via DXP pathway; isopentenyl diphosphate from 1-deoxy-D-xylulose 5-phosphate: step 6/6. Its function is as follows. Catalyzes the conversion of 1-hydroxy-2-methyl-2-(E)-butenyl 4-diphosphate (HMBPP) into a mixture of isopentenyl diphosphate (IPP) and dimethylallyl diphosphate (DMAPP). Acts in the terminal step of the DOXP/MEP pathway for isoprenoid precursor biosynthesis. The polypeptide is 4-hydroxy-3-methylbut-2-enyl diphosphate reductase (Bacillus anthracis (strain A0248)).